The sequence spans 24 residues: Acidic phospholipase A2 4 (24 aa).

The protein belongs to the phospholipase A2 family. Group II subfamily. Requires Ca(2+) as cofactor. As to expression, expressed by the venom gland.

The protein localises to the secreted. It catalyses the reaction a 1,2-diacyl-sn-glycero-3-phosphocholine + H2O = a 1-acyl-sn-glycero-3-phosphocholine + a fatty acid + H(+). Functionally, PLA2 catalyzes the calcium-dependent hydrolysis of the 2-acyl groups in 3-sn-phosphoglycerides. The chain is Acidic phospholipase A2 4 from Trimeresurus stejnegeri (Chinese green tree viper).